The sequence spans 291 residues: Secretory carrier-associated membrane protein 5 (291 aa).

Residues 1–10 are compositionally biased toward basic and acidic residues; it reads MGGRYDRNTF. The segment at 1–66 is disordered; the sequence is MGGRYDRNTF…GSGAQDLKKK (66 aa). Residues 1 to 126 are Cytoplasmic-facing; the sequence is MGGRYDRNTF…EILVRLQRLQ (126 aa). S34 carries the post-translational modification Phosphoserine. A coiled-coil region spans residues 58-94; sequence SGAQDLKKKEKELQAKEADLRRREQDLKRKQDAAARA. Transmembrane regions (helical) follow at residues 127 to 147, 159 to 179, 194 to 214, and 242 to 262; these read YIAF…IIAV, IWLL…VLWY, FGWF…AAVA, and IFYF…IWVI. The Cytoplasmic portion of the chain corresponds to 263–288; the sequence is QQVYMYFRGSGKADDMRRDAARGAMR.

This sequence belongs to the SCAMP family.

Its subcellular location is the cell membrane. It is found in the cytoplasmic vesicle. It localises to the secretory vesicle membrane. In terms of biological role, probably involved in membrane trafficking. The protein is Secretory carrier-associated membrane protein 5 (SCAMP5) of Arabidopsis thaliana (Mouse-ear cress).